Here is a 548-residue protein sequence, read N- to C-terminus: Probable sucrose-6-phosphate hydrolase (548 aa).

Residues 105-108, Gln-124, 167-168, 228-229, and Glu-283 each bind substrate; these read LLND, FS, and RD. Residue Asp-108 is part of the active site.

This sequence belongs to the glycosyl hydrolase 32 family.

The protein localises to the cytoplasm. The catalysed reaction is Hydrolysis of terminal non-reducing beta-D-fructofuranoside residues in beta-D-fructofuranosides.. It functions in the pathway glycan biosynthesis; sucrose metabolism. Enables the bacterium to metabolize sucrose as a sole carbon source. The polypeptide is Probable sucrose-6-phosphate hydrolase (Vibrio cholerae serotype O1 (strain ATCC 39315 / El Tor Inaba N16961)).